A 154-amino-acid polypeptide reads, in one-letter code: Host transcription reprogramming factor 5 (154 aa).

Positions 1-19 (MQILRIAQLMALLATCASA) are cleaved as a signal peptide. Positions 24-85 (TGSRVYSRDV…KRIKAEQNAR (62 aa)) are disordered. The span at 35 to 50 (QTQGGFSGSPTTNSPD) shows a compositional bias: polar residues. Over residues 69 to 85 (ETEKERKKRIKAEQNAR) the composition is skewed to basic and acidic residues. Residues 96 to 121 (YQCPYCSDPTVFSHSDALGRHIYTIH) form a C2H2-type; degenerate zinc finger.

It is found in the secreted. It localises to the host nucleus. Its function is as follows. Probable secreted effector that translocates into the nuclei of host cells to reprogram the expression of targeted genes by binding on effector binding elements in rice. In Pyricularia oryzae (strain 70-15 / ATCC MYA-4617 / FGSC 8958) (Rice blast fungus), this protein is Host transcription reprogramming factor 5.